A 119-amino-acid chain; its full sequence is Large ribosomal subunit protein uL18 (119 aa).

The protein belongs to the universal ribosomal protein uL18 family. As to quaternary structure, part of the 50S ribosomal subunit; part of the 5S rRNA/L5/L18/L25 subcomplex. Contacts the 5S and 23S rRNAs.

Functionally, this is one of the proteins that bind and probably mediate the attachment of the 5S RNA into the large ribosomal subunit, where it forms part of the central protuberance. This Borrelia hermsii (strain HS1 / DAH) protein is Large ribosomal subunit protein uL18.